Here is a 219-residue protein sequence, read N- to C-terminus: 7-methyl-GTP pyrophosphatase (219 aa).

The Proton acceptor role is filled by D89.

This sequence belongs to the Maf family. YceF subfamily. It depends on a divalent metal cation as a cofactor.

It is found in the cytoplasm. The catalysed reaction is N(7)-methyl-GTP + H2O = N(7)-methyl-GMP + diphosphate + H(+). Nucleoside triphosphate pyrophosphatase that hydrolyzes 7-methyl-GTP (m(7)GTP). May have a dual role in cell division arrest and in preventing the incorporation of modified nucleotides into cellular nucleic acids. The protein is 7-methyl-GTP pyrophosphatase of Polaromonas sp. (strain JS666 / ATCC BAA-500).